A 474-amino-acid polypeptide reads, in one-letter code: MSKKLHIKTWGCQMNEYDSSKMADLLDEYQGYTLTEEAEEADVLLLNTCSIREKAQEKVFHQLGRWKTLKDKNPNLIIGVGGCVASQEGKAIKDRAQCVDLIFGPQTLHRLPEMIEQIQQGGKAVIDVSFPEIEKFDRLPEPRAEGPSAFVSIMEGCSKYCSFCVVPYTRGEEVSRPVDDVILEIAQLAEQGVREVNLLGQNVNAYRGATHDDDICTFAELLRYVAAIDGIDRIRFTTSHPIEFTQDIIDVYEDTPELVSFLHLPVQSGSDLILTQMKRGHMAIEYKSIIRRLRKARPDIQISSDFIVGFPGESKQDFADTMKLIEDVQFDHSFSFIYSARPGTPASDLPDDVSLDEKKERLAILQDRITQQAMRYSRQMLGTVQRILVEGPSVKNPMELRGRTENNRVVNFEADPKHIGSFVDVEIVDVFTNSLRGKFIRGEDEMDLRRDLRPSDILAKHKKDDDLGVTQFIP.

Positions 3–120 constitute an MTTase N-terminal domain; sequence KKLHIKTWGC…LPEMIEQIQQ (118 aa). Residues cysteine 12, cysteine 49, cysteine 83, cysteine 157, cysteine 161, and cysteine 164 each coordinate [4Fe-4S] cluster. The Radical SAM core domain occupies 143-375; sequence RAEGPSAFVS…QDRITQQAMR (233 aa). The 64-residue stretch at 378-441 folds into the TRAM domain; it reads RQMLGTVQRI…TNSLRGKFIR (64 aa).

It belongs to the methylthiotransferase family. MiaB subfamily. As to quaternary structure, monomer. It depends on [4Fe-4S] cluster as a cofactor.

It localises to the cytoplasm. The enzyme catalyses N(6)-dimethylallyladenosine(37) in tRNA + (sulfur carrier)-SH + AH2 + 2 S-adenosyl-L-methionine = 2-methylsulfanyl-N(6)-dimethylallyladenosine(37) in tRNA + (sulfur carrier)-H + 5'-deoxyadenosine + L-methionine + A + S-adenosyl-L-homocysteine + 2 H(+). Catalyzes the methylthiolation of N6-(dimethylallyl)adenosine (i(6)A), leading to the formation of 2-methylthio-N6-(dimethylallyl)adenosine (ms(2)i(6)A) at position 37 in tRNAs that read codons beginning with uridine. The sequence is that of tRNA-2-methylthio-N(6)-dimethylallyladenosine synthase from Shewanella loihica (strain ATCC BAA-1088 / PV-4).